Here is a 569-residue protein sequence, read N- to C-terminus: Santalene synthase (569 aa).

4 residues coordinate (2E)-geranyl diphosphate: Arg284, Asp321, Asp325, and Arg460. Positions 321 and 325 each coordinate Mg(2+). Positions 321–325 (DDAYD) match the DDXXD motif motif. Positions 463, 467, and 471 each coordinate Mg(2+).

Belongs to the terpene synthase family. Tpsb subfamily. Mg(2+) is required as a cofactor. The cofactor is Mn(2+).

The catalysed reaction is (2E,6E)-farnesyl diphosphate = (1S,5S,6R)-alpha-bergamotene + diphosphate. It catalyses the reaction (2E,6E)-farnesyl diphosphate = (+)-alpha-santalene + diphosphate. The enzyme catalyses (2E,6E)-farnesyl diphosphate = (-)-beta-santalene + diphosphate. Catalyzes a mixture of sesquiterpenoids from (2E,6E)-farnesyl diphosphate in fragrance biosynthesis. Catalyzes the formation of alpha-santalene, beta-santalene, epi-beta-santalene and exo-alpha-bergamotene, as well as traces of alpha-farnesene and beta-farnesene. The chain is Santalene synthase from Santalum austrocaledonicum (Sandalwood).